The chain runs to 484 residues: 6-phosphogluconate dehydrogenase, decarboxylating (484 aa).

Residues 11–16, 34–36, 76–78, and Asn-104 each bind NADP(+); these read GLAVMG, NRT, and VRA. Residues Asn-104 and 130 to 132 contribute to the substrate site; that span reads SGG. Lys-185 (proton acceptor) is an active-site residue. Position 188–189 (188–189) interacts with substrate; sequence HN. Glu-192 (proton donor) is an active-site residue. Residues Tyr-193, Lys-262, Arg-289, Arg-447, and His-453 each coordinate substrate.

It belongs to the 6-phosphogluconate dehydrogenase family. As to quaternary structure, homodimer.

The catalysed reaction is 6-phospho-D-gluconate + NADP(+) = D-ribulose 5-phosphate + CO2 + NADPH. It functions in the pathway carbohydrate degradation; pentose phosphate pathway; D-ribulose 5-phosphate from D-glucose 6-phosphate (oxidative stage): step 3/3. In terms of biological role, catalyzes the oxidative decarboxylation of 6-phosphogluconate to ribulose 5-phosphate and CO(2), with concomitant reduction of NADP to NADPH. The polypeptide is 6-phosphogluconate dehydrogenase, decarboxylating (gnd) (Haemophilus influenzae (strain ATCC 51907 / DSM 11121 / KW20 / Rd)).